The primary structure comprises 95 residues: Small ribosomal subunit protein bS20c (95 aa).

Residues 76–95 are disordered; sequence NGSAKKAKLTKRLKEKKISL. Over residues 80 to 95 the composition is skewed to basic residues; the sequence is KKAKLTKRLKEKKISL.

It belongs to the bacterial ribosomal protein bS20 family.

It is found in the plastid. It localises to the chloroplast. Functionally, binds directly to 16S ribosomal RNA. This Guillardia theta (Cryptophyte) protein is Small ribosomal subunit protein bS20c.